We begin with the raw amino-acid sequence, 344 residues long: Phenylalanine--tRNA ligase alpha subunit (344 aa).

E256 provides a ligand contact to Mg(2+).

It belongs to the class-II aminoacyl-tRNA synthetase family. Phe-tRNA synthetase alpha subunit type 1 subfamily. As to quaternary structure, tetramer of two alpha and two beta subunits. Mg(2+) serves as cofactor.

The protein resides in the cytoplasm. It catalyses the reaction tRNA(Phe) + L-phenylalanine + ATP = L-phenylalanyl-tRNA(Phe) + AMP + diphosphate + H(+). The sequence is that of Phenylalanine--tRNA ligase alpha subunit from Bacillus mycoides (strain KBAB4) (Bacillus weihenstephanensis).